We begin with the raw amino-acid sequence, 605 residues long: Ankyrin repeat domain-containing protein 13D (605 aa).

ANK repeat units follow at residues 39-68 and 72-101; these read RGRTPLELAVSLGNLESVRVLLRHNANVGK and QGWAVLQEAVSTGDPEMVQLVLQYRDYQRA. The interval 306 to 333 is disordered; it reads AQQHSSHTGAPVQQAASPTNPTAISPEE. Positions 319–328 are enriched in polar residues; the sequence is QAASPTNPTA. 2 consecutive UIM domains span residues 482-501 and 528-547; these read EDDDLLQFAIQQSLLEAGTE and EEQLQLERALQESLQLSTEP. The disordered stretch occupies residues 541-605; the sequence is LQLSTEPRGP…RILQLSLTEH (65 aa). Over residues 550–563 the composition is skewed to pro residues; that stretch reads PGSPPRTPPAPGPP. Phosphoserine is present on serine 552. Threonine 556 is subject to Phosphothreonine. The segment covering 564 to 575 has biased composition (low complexity); that stretch reads SFEEQLRLALEL. 2 UIM domains span residues 564–583 and 589–605; these read SFEEQLRLALELSSREQEER and QEEEDLQRILQLSLTEH. The segment covering 576–589 has biased composition (basic and acidic residues); that stretch reads SSREQEERERRGQQ.

As to quaternary structure, interacts with EGFR (ubiquitinated); the interaction is direct and may regulate EGFR internalization.

Its subcellular location is the cell membrane. It localises to the late endosome. Functionally, ubiquitin-binding protein that specifically recognizes and binds 'Lys-63'-linked ubiquitin. Does not bind 'Lys-48'-linked ubiquitin. Positively regulates the internalization of ligand-activated EGFR by binding to the Ub moiety of ubiquitinated EGFR at the cell membrane. The sequence is that of Ankyrin repeat domain-containing protein 13D (ANKRD13D) from Homo sapiens (Human).